The sequence spans 352 residues: Light dependent period A (352 aa).

4Fe-4S ferredoxin-type domains are found at residues 88-119 (RRAWFDPDRCPTDCPRPCERVCPTDAITSTGV) and 121-144 (RDRCYGCGRCLPICPLGLIEAQAW). [4Fe-4S] cluster contacts are provided by Cys-97, Cys-101, Cys-105, Cys-109, Cys-124, Cys-127, Cys-130, and Cys-134.

In terms of assembly, interacts with KaiA, CikA and SasA; the complexes do not follow circadian rhythms. [4Fe-4S] cluster serves as cofactor.

Functionally, functions in an input pathway to the Kai circadian clock. Probably senses the metabolic state of the cell via plastoquinone levels and informs the clock to modulate the photoperiod length. Deletion decreases the ability of the bacteria to modulate the circadian period in response to altered light regimes. Mild overexpression increases the photoperiod. Rapidly degraded in the presence of the quinone analog DBMIB (2,5-dibromo-3-methyl-6-isopropyl-p-benzoquinone), an artifical electron acceptor for photosystem II that reduces the plastoquinone pool. Partially resonsible for sensitivity of CikA to DBMIB, influences the levels of KaiA. The polypeptide is Light dependent period A (Synechococcus elongatus (strain ATCC 33912 / PCC 7942 / FACHB-805) (Anacystis nidulans R2)).